We begin with the raw amino-acid sequence, 212 residues long: Large ribosomal subunit protein uL3 (212 aa).

The segment at 136–155 (THGNSLSHRSNGSIGQNQTP) is disordered. Q153 is modified (N5-methylglutamine).

This sequence belongs to the universal ribosomal protein uL3 family. In terms of assembly, part of the 50S ribosomal subunit. Forms a cluster with proteins L14 and L19. Methylated by PrmB.

One of the primary rRNA binding proteins, it binds directly near the 3'-end of the 23S rRNA, where it nucleates assembly of the 50S subunit. This Shewanella baltica (strain OS223) protein is Large ribosomal subunit protein uL3.